The primary structure comprises 383 residues: Chorismate synthase (383 aa).

Residue Arg-48 coordinates NADP(+). FMN-binding positions include 125–127 (RSS), Gly-286, 301–305 (HAPTS), and Arg-328. Residues 361–383 (PDRLDDNPGQYETEYHPSSPQTN) form a disordered region.

Belongs to the chorismate synthase family. It depends on FMNH2 as a cofactor.

It catalyses the reaction 5-O-(1-carboxyvinyl)-3-phosphoshikimate = chorismate + phosphate. The protein operates within metabolic intermediate biosynthesis; chorismate biosynthesis; chorismate from D-erythrose 4-phosphate and phosphoenolpyruvate: step 7/7. In terms of biological role, catalyzes the anti-1,4-elimination of the C-3 phosphate and the C-6 proR hydrogen from 5-enolpyruvylshikimate-3-phosphate (EPSP) to yield chorismate, which is the branch point compound that serves as the starting substrate for the three terminal pathways of aromatic amino acid biosynthesis. This reaction introduces a second double bond into the aromatic ring system. In Haloquadratum walsbyi (strain DSM 16790 / HBSQ001), this protein is Chorismate synthase.